The following is a 310-amino-acid chain: N-acetyl-gamma-glutamyl-phosphate reductase (310 aa).

Cys-117 is a catalytic residue.

Belongs to the NAGSA dehydrogenase family. Type 2 subfamily.

The protein localises to the cytoplasm. The catalysed reaction is N-acetyl-L-glutamate 5-semialdehyde + phosphate + NADP(+) = N-acetyl-L-glutamyl 5-phosphate + NADPH + H(+). It participates in amino-acid biosynthesis; L-arginine biosynthesis; N(2)-acetyl-L-ornithine from L-glutamate: step 3/4. Catalyzes the NADPH-dependent reduction of N-acetyl-5-glutamyl phosphate to yield N-acetyl-L-glutamate 5-semialdehyde. This Allorhizobium ampelinum (strain ATCC BAA-846 / DSM 112012 / S4) (Agrobacterium vitis (strain S4)) protein is N-acetyl-gamma-glutamyl-phosphate reductase.